Here is an 82-residue protein sequence, read N- to C-terminus: MAKVCMVTGKRPISGNNVSHANNKTRRRFYPNLHKHRFWVESENRFVKLKLSAKGFRIIDKKGINIVLTEIRARGKFKESSL.

Belongs to the bacterial ribosomal protein bL28 family.

The polypeptide is Large ribosomal subunit protein bL28 (Vesicomyosocius okutanii subsp. Calyptogena okutanii (strain HA)).